Reading from the N-terminus, the 253-residue chain is Indole-3-glycerol phosphate synthase (253 aa).

Belongs to the TrpC family.

It carries out the reaction 1-(2-carboxyphenylamino)-1-deoxy-D-ribulose 5-phosphate + H(+) = (1S,2R)-1-C-(indol-3-yl)glycerol 3-phosphate + CO2 + H2O. The protein operates within amino-acid biosynthesis; L-tryptophan biosynthesis; L-tryptophan from chorismate: step 4/5. The sequence is that of Indole-3-glycerol phosphate synthase from Bacillus cereus (strain ATCC 14579 / DSM 31 / CCUG 7414 / JCM 2152 / NBRC 15305 / NCIMB 9373 / NCTC 2599 / NRRL B-3711).